The primary structure comprises 126 residues: UPF0102 protein plu4003 (126 aa).

It belongs to the UPF0102 family.

This chain is UPF0102 protein plu4003, found in Photorhabdus laumondii subsp. laumondii (strain DSM 15139 / CIP 105565 / TT01) (Photorhabdus luminescens subsp. laumondii).